The following is a 226-amino-acid chain: Ethylene-responsive transcription factor-like protein At4g13040 (226 aa).

2 disordered regions span residues glutamate 63–valine 109 and lysine 195–methionine 226. The span at proline 97–valine 109 shows a compositional bias: basic residues. A DNA-binding region (AP2/ERF) is located at residues arginine 105 to glutamate 171. The segment covering glutamate 217–methionine 226 has biased composition (acidic residues).

This sequence belongs to the AP2/ERF transcription factor family.

It is found in the nucleus. Functionally, probably acts as a transcriptional activator. Binds to the GCC-box pathogenesis-related promoter element. May be involved in the regulation of gene expression by stress factors and by components of stress signal transduction pathways. This is Ethylene-responsive transcription factor-like protein At4g13040 from Arabidopsis thaliana (Mouse-ear cress).